Here is a 455-residue protein sequence, read N- to C-terminus: Lysine histidine transporter-like 4 (455 aa).

Topologically, residues 1–38 are cytoplasmic; it reads MAGIPDHIQDQHLVEEDQPFDLEDWLPITASRNANWYY. A helical membrane pass occupies residues 39 to 59; that stretch reads SAFHNVTAIVGAGVLGLPYAM. At 60–61 the chain is on the extracellular side; it reads SE. A helical transmembrane segment spans residues 62–82; sequence LGWGPGVVVLILSWVITLYTL. The Cytoplasmic portion of the chain corresponds to 83 to 113; sequence WQMIEMHEMFEGQRFDRYHELGQAAFGKKLG. The helical transmembrane segment at 114-134 threads the bilayer; sequence LYIIVPLQLLVEISVCIVYMV. Residues 135 to 158 lie on the Extracellular side of the membrane; sequence TGGKSLKNVHDLALGDGDKCTKLR. A helical membrane pass occupies residues 159 to 179; the sequence is IQHFILIFASSQFVLSLLKNF. Topologically, residues 180–181 are cytoplasmic; that stretch reads NS. Residues 182–202 traverse the membrane as a helical segment; that stretch reads ISGVSLVAAVMSVSYSTIAWV. The Extracellular segment spans residues 203 to 226; it reads ASLRKGATTGSVEYGYRKRTTSVP. Residues 227–247 traverse the membrane as a helical segment; sequence LAFLSALGEMAFAYAGHNVVL. At 248-267 the chain is on the cytoplasmic side; sequence EIQATIPSTPENPSKRPMWK. Residues 268 to 288 traverse the membrane as a helical segment; sequence GAVVAYIIVAFCYFPVALVGF. At 289–307 the chain is on the extracellular side; the sequence is KTFGNSVEESILESLTKPT. Residues 308–328 traverse the membrane as a helical segment; sequence ALVIVANMFVVIHLLGSYQVY. Residues 329 to 357 lie on the Cytoplasmic side of the membrane; the sequence is AMPVFDMIESVMIRIWHFSPTRVLRFTIR. Residues 358-378 traverse the membrane as a helical segment; sequence WTFVAATMGIAVGLPYYSALL. A topological domain (extracellular) is located at residue Ser379. The chain crosses the membrane as a helical span at residues 380-400; the sequence is FFGGFVFAPTTYFIPCIMWLI. Over 401-412 the chain is Cytoplasmic; sequence LKKPKRFSLSWC. A helical transmembrane segment spans residues 413 to 433; that stretch reads MNWFCIIFGLVLMIIAPIGGL. Over 434–455 the chain is Extracellular; sequence AKLIYNIQKGTLPNSRCNLPKH.

Belongs to the amino acid/polyamine transporter 2 family. Amino acid/auxin permease (AAAP) (TC 2.A.18.2) subfamily.

It localises to the cell membrane. Functionally, amino acid transporter. This chain is Lysine histidine transporter-like 4, found in Arabidopsis thaliana (Mouse-ear cress).